A 270-amino-acid chain; its full sequence is Cyclic pyranopterin monophosphate synthase, mitochondrial (270 aa).

A mitochondrion-targeting transit peptide spans 1–32 (MISTLRRAVFLRRFPAVVSPIKRAFSSRIDDE). Substrate-binding positions include 187 to 189 (LCH) and 225 to 226 (ME). The active site involves Asp-240.

It belongs to the MoaC family. In terms of assembly, homohexamer. In terms of tissue distribution, abundantly expressed in the roots.

Its subcellular location is the mitochondrion matrix. It catalyses the reaction (8S)-3',8-cyclo-7,8-dihydroguanosine 5'-triphosphate = cyclic pyranopterin phosphate + diphosphate. Its pathway is cofactor biosynthesis; molybdopterin biosynthesis. In terms of biological role, catalyzes the conversion of (8S)-3',8-cyclo-7,8-dihydroguanosine 5'-triphosphate to cyclic pyranopterin monophosphate (cPMP). The chain is Cyclic pyranopterin monophosphate synthase, mitochondrial (CNX3) from Arabidopsis thaliana (Mouse-ear cress).